The primary structure comprises 131 residues: Small ribosomal subunit protein uS9 (131 aa).

Positions 102–131 (AGFLTRDPRMKERRKYGLKKARKAPQFSKR) are disordered. Positions 112–131 (KERRKYGLKKARKAPQFSKR) are enriched in basic residues.

Belongs to the universal ribosomal protein uS9 family.

The protein is Small ribosomal subunit protein uS9 of Desulfitobacterium hafniense (strain DSM 10664 / DCB-2).